The following is a 475-amino-acid chain: Methyltransferase-like protein 25B (475 aa).

Positions 186-210 (QRLVERAQRLDQELLQTLEKEEKRN) form a coiled coil. Residues 406-426 (VVAFFSLALLLAPLVETLILL) traverse the membrane as a helical segment.

Belongs to the METTL25 family.

It localises to the membrane. In Bos taurus (Bovine), this protein is Methyltransferase-like protein 25B.